A 436-amino-acid polypeptide reads, in one-letter code: Tol-Pal system protein TolB (436 aa).

The first 28 residues, 1–28 (MEMLRRNFFRLLMVLVAGCGLIASPAKA), serve as a signal peptide directing secretion.

Belongs to the TolB family. As to quaternary structure, the Tol-Pal system is composed of five core proteins: the inner membrane proteins TolA, TolQ and TolR, the periplasmic protein TolB and the outer membrane protein Pal. They form a network linking the inner and outer membranes and the peptidoglycan layer.

It localises to the periplasm. In terms of biological role, part of the Tol-Pal system, which plays a role in outer membrane invagination during cell division and is important for maintaining outer membrane integrity. The protein is Tol-Pal system protein TolB of Sinorhizobium medicae (strain WSM419) (Ensifer medicae).